Reading from the N-terminus, the 407-residue chain is uncharacterized protein (407 aa).

This is an uncharacterized protein from Mycobacterium bovis (strain ATCC BAA-935 / AF2122/97).